We begin with the raw amino-acid sequence, 141 residues long: 3-hydroxyacyl-[acyl-carrier-protein] dehydratase FabZ (141 aa).

Histidine 49 is an active-site residue.

Belongs to the thioester dehydratase family. FabZ subfamily.

The protein localises to the cytoplasm. The enzyme catalyses a (3R)-hydroxyacyl-[ACP] = a (2E)-enoyl-[ACP] + H2O. Functionally, involved in unsaturated fatty acids biosynthesis. Catalyzes the dehydration of short chain beta-hydroxyacyl-ACPs and long chain saturated and unsaturated beta-hydroxyacyl-ACPs. This Fusobacterium nucleatum subsp. nucleatum (strain ATCC 25586 / DSM 15643 / BCRC 10681 / CIP 101130 / JCM 8532 / KCTC 2640 / LMG 13131 / VPI 4355) protein is 3-hydroxyacyl-[acyl-carrier-protein] dehydratase FabZ.